Reading from the N-terminus, the 242-residue chain is Transcriptional regulatory protein GltR (242 aa).

Residues 7-123 (SILLVDDDQE…ELLARIKALL (117 aa)) enclose the Response regulatory domain. 4-aspartylphosphate is present on Asp-56. Residues 134–234 (GDVLAFEDWR…VRGSGYLLAA (101 aa)) constitute a DNA-binding region (ompR/PhoB-type).

Post-translationally, phosphorylated by GtrS.

The protein resides in the cytoplasm. Its activity is regulated as follows. Phosphorylation of GltR induces its dissociation from DNA leading to transcriptional activation. Its function is as follows. Member of the two-component regulatory system GtrS/GltR involved in the regulation of glucose metabolism and transport, as well as regulation of the exotoxin A gene expression. GltR controls the transcription of genes involved in glucose metabolism (glk and edd/gap-1) and transport (oprB) as well as the expression of toxA that encodes exotoxin A, the primary virulence factor. Acts as a repressor that is released from its target operators upon phosphorylation. Functionally, contributes to modulation of the type III secretion system (T3SS) in response to host cells via the regulation of the OprB transport system. This is Transcriptional regulatory protein GltR from Pseudomonas aeruginosa (strain ATCC 15692 / DSM 22644 / CIP 104116 / JCM 14847 / LMG 12228 / 1C / PRS 101 / PAO1).